We begin with the raw amino-acid sequence, 875 residues long: Metal transporter CNNM2 (875 aa).

The Extracellular segment spans residues 1–250 (MIGCGACEPE…TKMIVGEEKK (250 aa)). An N-linked (GlcNAc...) asparagine glycan is attached at N112. Residues 122–148 (EHERRRHTPGERGLGGPAPPEPDSGPQ) are disordered. Residues 251-271 (FLLPFWLQVIFISLLLCLSGM) form a helical membrane-spanning segment. The CNNM transmembrane domain maps to 251–431 (FLLPFWLQVI…DPYNDLVKEE (181 aa)). Residues 272 to 313 (FSGLNLGLMALDPMELRIVQNCGTEKEKNYAKRIEPVRRQGN) are Cytoplasmic-facing. The helical intramembrane region spans 314 to 334 (YLLCSLLLGNVLVNTTLTILL). Residues 335 to 338 (DDIA) lie on the Cytoplasmic side of the membrane. Residues 339 to 359 (GSGLVAVVVSTIGIVIFGEIV) traverse the membrane as a helical segment. At 360 to 368 (PQAICSRHG) the chain is on the extracellular side. A helical membrane pass occupies residues 369–389 (LAVGANTIFLTKFFMMMTFPA). Residues 390–875 (SYPVSKLLDC…NHSLHSEGAI (486 aa)) are Cytoplasmic-facing. CBS domains follow at residues 450–511 (MTPL…CTPL) and 518–584 (YNHP…ILDE). The segment at 741 to 763 (AGSPGENKSPPRPCGLNHSDSLS) is disordered. S761 is modified (phosphoserine).

Belongs to the ACDP family.

Its subcellular location is the cell membrane. Functionally, divalent metal cation transporter. Mediates transport of divalent metal cations in an order of Mg(2+) &gt; Co(2+) &gt; Mn(2+) &gt; Sr(2+) &gt; Ba(2+) &gt; Cu(2+) &gt; Fe(2+). The chain is Metal transporter CNNM2 (Cnnm2) from Rattus norvegicus (Rat).